Reading from the N-terminus, the 258-residue chain is Ribose-5-phosphate isomerase (258 aa).

The protein belongs to the ribose 5-phosphate isomerase family.

It is found in the cytoplasm. It catalyses the reaction aldehydo-D-ribose 5-phosphate = D-ribulose 5-phosphate. The protein operates within carbohydrate degradation; pentose phosphate pathway; D-ribose 5-phosphate from D-ribulose 5-phosphate (non-oxidative stage): step 1/1. The sequence is that of Ribose-5-phosphate isomerase (RKI1) from Saccharomyces cerevisiae (strain YJM789) (Baker's yeast).